The following is a 222-amino-acid chain: Deoxyribose-phosphate aldolase (222 aa).

Residue aspartate 93 is the Proton donor/acceptor of the active site. Lysine 156 functions as the Schiff-base intermediate with acetaldehyde in the catalytic mechanism. Lysine 186 acts as the Proton donor/acceptor in catalysis.

The protein belongs to the DeoC/FbaB aldolase family. DeoC type 1 subfamily.

It localises to the cytoplasm. It catalyses the reaction 2-deoxy-D-ribose 5-phosphate = D-glyceraldehyde 3-phosphate + acetaldehyde. It functions in the pathway carbohydrate degradation; 2-deoxy-D-ribose 1-phosphate degradation; D-glyceraldehyde 3-phosphate and acetaldehyde from 2-deoxy-alpha-D-ribose 1-phosphate: step 2/2. Functionally, catalyzes a reversible aldol reaction between acetaldehyde and D-glyceraldehyde 3-phosphate to generate 2-deoxy-D-ribose 5-phosphate. This Corynebacterium glutamicum (strain ATCC 13032 / DSM 20300 / JCM 1318 / BCRC 11384 / CCUG 27702 / LMG 3730 / NBRC 12168 / NCIMB 10025 / NRRL B-2784 / 534) protein is Deoxyribose-phosphate aldolase.